The primary structure comprises 254 residues: Adenosine 5'-phosphosulfate reductase (254 aa).

[4Fe-4S] cluster is bound by residues cysteine 131, cysteine 132, cysteine 212, and cysteine 215. Cysteine 238 (nucleophile; cysteine thiosulfonate intermediate) is an active-site residue.

The protein belongs to the PAPS reductase family. CysH subfamily. Requires [4Fe-4S] cluster as cofactor.

The protein localises to the cytoplasm. It catalyses the reaction [thioredoxin]-disulfide + sulfite + AMP + 2 H(+) = adenosine 5'-phosphosulfate + [thioredoxin]-dithiol. It functions in the pathway sulfur metabolism; hydrogen sulfide biosynthesis; sulfite from sulfate. Catalyzes the formation of sulfite from adenosine 5'-phosphosulfate (APS) using thioredoxin as an electron donor. This Mesorhizobium japonicum (strain LMG 29417 / CECT 9101 / MAFF 303099) (Mesorhizobium loti (strain MAFF 303099)) protein is Adenosine 5'-phosphosulfate reductase.